We begin with the raw amino-acid sequence, 386 residues long: Succinate--CoA ligase [ADP-forming] subunit beta (386 aa).

The ATP-grasp domain maps to 9–244 (KAVLRSYGVS…LDEEDAKEIE (236 aa)). ATP contacts are provided by residues lysine 46, 53–55 (GRG), glutamate 99, cysteine 102, and glutamate 107. Residues asparagine 199 and aspartate 213 each coordinate Mg(2+). Residues asparagine 264 and 321–323 (GIM) contribute to the substrate site.

Belongs to the succinate/malate CoA ligase beta subunit family. In terms of assembly, heterotetramer of two alpha and two beta subunits. Mg(2+) is required as a cofactor.

The catalysed reaction is succinate + ATP + CoA = succinyl-CoA + ADP + phosphate. It catalyses the reaction GTP + succinate + CoA = succinyl-CoA + GDP + phosphate. Its pathway is carbohydrate metabolism; tricarboxylic acid cycle; succinate from succinyl-CoA (ligase route): step 1/1. Functionally, succinyl-CoA synthetase functions in the citric acid cycle (TCA), coupling the hydrolysis of succinyl-CoA to the synthesis of either ATP or GTP and thus represents the only step of substrate-level phosphorylation in the TCA. The beta subunit provides nucleotide specificity of the enzyme and binds the substrate succinate, while the binding sites for coenzyme A and phosphate are found in the alpha subunit. This is Succinate--CoA ligase [ADP-forming] subunit beta from Bacillus thuringiensis (strain Al Hakam).